The following is a 778-amino-acid chain: Dolichyl-phosphate-mannose--protein mannosyltransferase 4 (778 aa).

Residues 1–28 are compositionally biased toward basic and acidic residues; the sequence is MASKSEKAVKKAQKLSKEPSVELTDTKS. The interval 1-44 is disordered; the sequence is MASKSEKAVKKAQKLSKEPSVELTDTKSSDNVTPKQKSPNSTEE. Positions 29–41 are enriched in polar residues; it reads SDNVTPKQKSPNS. A glycan (N-linked (GlcNAc...) asparagine) is linked at Asn-40. Transmembrane regions (helical) follow at residues 60–80, 103–123, 145–165, 196–216, 223–243, 248–268, and 288–308; these read LAFVLITVLSFITRFWNLNLP, FFDLHPPFAKLLLALVAKLAG, VTIRAWPALLSSLVPPVVFLI, ILLDATLLFSMVCAIYCYVRF, PFSRPWWAWLFFTGFFLSCTI, VGFFTFLSIGLSVCLELWYLW, and FCLIFFPFLFFLFWFYMHFNI. A glycan (N-linked (GlcNAc...) asparagine) is linked at Asn-335. MIR domains lie at 336–396, 408–467, and 474–529; these read STIL…ILPA, NVPV…VVMS, and RPLY…FDDI. Transmembrane regions (helical) follow at residues 608-628, 644-664, 669-689, and 726-746; these read WWIIAGTVLSTTVVAAAEILL, FYRSTMFFYMTYVFHYLPFFI, LFLHHYLPAHLAGSLLVGAFI, and VIELICTLLLIFVVIYCFTFF.

Belongs to the glycosyltransferase 39 family.

The protein localises to the endoplasmic reticulum membrane. It catalyses the reaction a di-trans,poly-cis-dolichyl beta-D-mannosyl phosphate + L-seryl-[protein] = 3-O-(alpha-D-mannosyl)-L-seryl-[protein] + a di-trans,poly-cis-dolichyl phosphate + H(+). It carries out the reaction a di-trans,poly-cis-dolichyl beta-D-mannosyl phosphate + L-threonyl-[protein] = 3-O-(alpha-D-mannosyl)-L-threonyl-[protein] + a di-trans,poly-cis-dolichyl phosphate + H(+). It participates in protein modification; protein glycosylation. Its function is as follows. Transfers mannose from Dol-P-mannose to Ser or Thr residues on proteins. Required for normal cell wall and septum formation. This is Dolichyl-phosphate-mannose--protein mannosyltransferase 4 (ogm4) from Schizosaccharomyces pombe (strain 972 / ATCC 24843) (Fission yeast).